A 559-amino-acid polypeptide reads, in one-letter code: Aspartokinase 3, chloroplastic (559 aa).

Residues 1–85 constitute a chloroplast transit peptide; that stretch reads MAASMQFYGV…LNKTEKKLTC (85 aa). ATP contacts are provided by Lys-88, Gly-91, and Ser-120. Position 204 (Glu-204) interacts with substrate. 2 consecutive ACT domains span residues 402–480 and 481–559; these read ITST…SIIS and LIGN…AASS.

This sequence belongs to the aspartokinase family. Highly expressed in xylem of leaves and hypocotyls, stele of roots and in trichomes after bolting. Weak expression in veins and mesophyll cells of caulone leaves, inflorescence stems, sepals, petals and stigmata.

It is found in the plastid. It localises to the chloroplast. It carries out the reaction L-aspartate + ATP = 4-phospho-L-aspartate + ADP. The protein operates within amino-acid biosynthesis; L-lysine biosynthesis via DAP pathway; (S)-tetrahydrodipicolinate from L-aspartate: step 1/4. It functions in the pathway amino-acid biosynthesis; L-methionine biosynthesis via de novo pathway; L-homoserine from L-aspartate: step 1/3. It participates in amino-acid biosynthesis; L-threonine biosynthesis; L-threonine from L-aspartate: step 1/5. With respect to regulation, allosterically inhibited by lysine, but not by S-adenosyl-L-methionine (SAM). K(0.5) for lysine in the presence of physiological concentrations of substrates is 7.4 uM. No inhibition by threonine or leucine and no activation or inhibition by alanine, cysteine, isoleucine, serine, valine, methionine, glutamine, asparagine, glutamic acid or arginine. In terms of biological role, involved in the first step of essential amino acids lysine, threonine, methionine and isoleucine synthesis via the aspartate-family pathway. The chain is Aspartokinase 3, chloroplastic (AK3) from Arabidopsis thaliana (Mouse-ear cress).